The primary structure comprises 213 residues: Pyrrolidone-carboxylate peptidase (213 aa).

Residues Glu-78, Cys-141, and His-165 contribute to the active site.

It belongs to the peptidase C15 family. As to quaternary structure, homotetramer.

It is found in the cytoplasm. The catalysed reaction is Release of an N-terminal pyroglutamyl group from a polypeptide, the second amino acid generally not being Pro.. Its function is as follows. Removes 5-oxoproline from various penultimate amino acid residues except L-proline. This Staphylococcus saprophyticus subsp. saprophyticus (strain ATCC 15305 / DSM 20229 / NCIMB 8711 / NCTC 7292 / S-41) protein is Pyrrolidone-carboxylate peptidase.